The sequence spans 53 residues: Sec-independent protein translocase protein TatA (53 aa).

A helical transmembrane segment spans residues 1–21 (MGMSFSHLLIVLLIIFVLFGA).

It belongs to the TatA/E family. The Tat system comprises two distinct complexes: a TatABC complex, containing multiple copies of TatA, TatB and TatC subunits, and a separate TatA complex, containing only TatA subunits. Substrates initially bind to the TatABC complex, which probably triggers association of the separate TatA complex to form the active translocon.

The protein localises to the cell inner membrane. Its function is as follows. Part of the twin-arginine translocation (Tat) system that transports large folded proteins containing a characteristic twin-arginine motif in their signal peptide across membranes. TatA could form the protein-conducting channel of the Tat system. The chain is Sec-independent protein translocase protein TatA from Rickettsia rickettsii (strain Iowa).